Reading from the N-terminus, the 146-residue chain is Protein MGF 100-3L (146 aa).

This sequence belongs to the asfivirus MGF 100 family.

Plays a role in virus cell tropism, and may be required for efficient virus replication in macrophages. This Ornithodoros (relapsing fever ticks) protein is Protein MGF 100-3L.